The primary structure comprises 407 residues: Venom metalloproteinase 3 (407 aa).

N-linked (GlcNAc...) asparagine glycans are attached at residues Asn42, Asn91, Asn126, and Asn166. The Peptidase M12B domain occupies 191–405 (FYPKLLVLVD…TSAACLKDTY (215 aa)). Disulfide bonds link Cys317–Cys400 and Cys356–Cys384. His340 provides a ligand contact to Zn(2+). Glu341 is a catalytic residue. Zn(2+) contacts are provided by His344 and His350. Asn391 carries N-linked (GlcNAc...) asparagine glycosylation.

This sequence in the C-terminal section; belongs to the venom metalloproteinase (M12B) family. As to quaternary structure, monomer. The cofactor is Zn(2+). Expressed by the venom gland.

It is found in the secreted. With respect to regulation, the gelatinase activity is inhibited by EDTA. Its function is as follows. The recombinant protein has gelatinase activity. In vivo, injection of this recombinant into fifth instar L.oleracea (host) larvae results in partial insect mortality associated with the molt to sixth instar, with surviving insects showing retarded development and growth. In Eulophus pennicornis (Parasitoid wasp), this protein is Venom metalloproteinase 3.